A 497-amino-acid chain; its full sequence is Guanosine-5'-triphosphate,3'-diphosphate pyrophosphatase (497 aa).

This sequence belongs to the GppA/Ppx family. GppA subfamily.

It catalyses the reaction guanosine 3'-diphosphate 5'-triphosphate + H2O = guanosine 3',5'-bis(diphosphate) + phosphate + H(+). Its pathway is purine metabolism; ppGpp biosynthesis; ppGpp from GTP: step 2/2. Functionally, catalyzes the conversion of pppGpp to ppGpp. Guanosine pentaphosphate (pppGpp) is a cytoplasmic signaling molecule which together with ppGpp controls the 'stringent response', an adaptive process that allows bacteria to respond to amino acid starvation, resulting in the coordinated regulation of numerous cellular activities. This Vibrio parahaemolyticus serotype O3:K6 (strain RIMD 2210633) protein is Guanosine-5'-triphosphate,3'-diphosphate pyrophosphatase.